Here is a 1416-residue protein sequence, read N- to C-terminus: DNA-directed RNA polymerase subunit beta' (1416 aa).

Positions 71, 73, 86, and 89 each coordinate Zn(2+). Mg(2+) contacts are provided by aspartate 461, aspartate 463, and aspartate 465. Positions 815, 889, 896, and 899 each coordinate Zn(2+).

The protein belongs to the RNA polymerase beta' chain family. In terms of assembly, the RNAP catalytic core consists of 2 alpha, 1 beta, 1 beta' and 1 omega subunit. When a sigma factor is associated with the core the holoenzyme is formed, which can initiate transcription. Requires Mg(2+) as cofactor. The cofactor is Zn(2+).

It catalyses the reaction RNA(n) + a ribonucleoside 5'-triphosphate = RNA(n+1) + diphosphate. Functionally, DNA-dependent RNA polymerase catalyzes the transcription of DNA into RNA using the four ribonucleoside triphosphates as substrates. The protein is DNA-directed RNA polymerase subunit beta' of Haemophilus influenzae (strain PittGG).